Here is a 209-residue protein sequence, read N- to C-terminus: Uracil phosphoribosyltransferase (209 aa).

Residues Arg-79, Arg-104, and 131–139 (DPMLATGGT) each bind 5-phospho-alpha-D-ribose 1-diphosphate. Residues Ile-194 and 199–201 (GDA) each bind uracil. Asp-200 is a binding site for 5-phospho-alpha-D-ribose 1-diphosphate.

It belongs to the UPRTase family. Mg(2+) is required as a cofactor.

It catalyses the reaction UMP + diphosphate = 5-phospho-alpha-D-ribose 1-diphosphate + uracil. The protein operates within pyrimidine metabolism; UMP biosynthesis via salvage pathway; UMP from uracil: step 1/1. With respect to regulation, allosterically activated by GTP. Its function is as follows. Catalyzes the conversion of uracil and 5-phospho-alpha-D-ribose 1-diphosphate (PRPP) to UMP and diphosphate. The protein is Uracil phosphoribosyltransferase of Pseudoalteromonas atlantica (strain T6c / ATCC BAA-1087).